The primary structure comprises 122 residues: Large ribosomal subunit protein uL14 (122 aa).

Belongs to the universal ribosomal protein uL14 family. As to quaternary structure, part of the 50S ribosomal subunit. Forms a cluster with proteins L3 and L19. In the 70S ribosome, L14 and L19 interact and together make contacts with the 16S rRNA in bridges B5 and B8.

Its function is as follows. Binds to 23S rRNA. Forms part of two intersubunit bridges in the 70S ribosome. This chain is Large ribosomal subunit protein uL14, found in Kineococcus radiotolerans (strain ATCC BAA-149 / DSM 14245 / SRS30216).